Reading from the N-terminus, the 391-residue chain is uncharacterized protein (391 aa).

The next 11 membrane-spanning stretches (helical) occupy residues 15–35, 48–68, 81–101, 139–159, 167–187, 217–237, 251–271, 275–295, 303–323, 346–366, and 369–389; these read LSFC…LPIL, FLIG…QIPF, IIFG…TNSI, IIGV…PIIA, IFWI…FLIP, FYLG…IIPY, IVYF…VFYF, FFLK…LLLF, ICLT…EIFF, TSQF…CTFF, and NHIF…SFFC.

It belongs to the major facilitator superfamily.

It is found in the cell membrane. This is an uncharacterized protein from Buchnera aphidicola subsp. Schizaphis graminum (strain Sg).